The primary structure comprises 211 residues: Mitotic spindle assembly checkpoint protein MAD2B (211 aa).

An HORMA domain is found at 13–203 (QVVADVLCEF…SDILKMQLYV (191 aa)). Positions 21–155 (EFLEVAVHLI…FTVLVHTREA (135 aa)) are mediates interaction with REV1 and REV3L and homodimerization. The mediates interaction with ipaB stretch occupies residues 150–211 (VHTREAATRN…YVEERAHKGS (62 aa)).

Homooligomer. Heterodimer with REV3L. This dimer forms the minimal DNA polymerase zeta complex (Pol-zeta2), with REV3L bearing DNA polymerase catalytic activity, although its activity is very low in this context. Component of the tetrameric Pol-zeta complex (Pol-zeta4), which consists of REV3L, MAD2L2, POLD2 and POLD3; Pol-zeta4 is the fully active form of DNA polymerase zeta. Component of the shieldin complex, consisting of SHLD1, SHLD2, SHLD3 and MAD2L2/REV7. Within the complex, SHLD2 forms a scaffold which interacts with a SHLD3-MAD2L2 subcomplex via its N-terminus, and with SHLD1 via its C-terminus. Interacts with REV1. Interacts with ADAM9. Interacts with CHAMP1. Interacts with FZR1 (in complex with the anaphase promoting complex APC). Interacts with CDC20; PubMed:11459825 could not detect the interaction. Interacts with RAN. Interacts with ELK1; the interaction is direct and recruits MAD2L2 to ELK1-specific promoters. May interact with the JNK kinases MAPK8 and/or MAPK9 to stimulate ELK1 phosphorylation and transcriptional activity upon DNA damage. Interacts with TCF7L2; prevents its binding to promoters and negatively modulates its transcriptional activity. Interacts with YY1AP1. Interacts with S.flexneri protein ipaB; prevents the interaction of MAD2L2 with FZR1 and CDC20 resulting in an activation of the anaphase-promoting complex APC and a cell cycle arrest. Interacts with PRCC; the interaction is direct. Interacts with POGZ. Interacts with ASTE1. As to expression, ubiquitously expressed.

The protein resides in the nucleus. It localises to the cytoplasm. It is found in the cytoskeleton. The protein localises to the spindle. Its subcellular location is the chromosome. In terms of biological role, adapter protein able to interact with different proteins and involved in different biological processes. Mediates the interaction between the error-prone DNA polymerase zeta catalytic subunit REV3L and the inserter polymerase REV1, thereby mediating the second polymerase switching in translesion DNA synthesis. Translesion DNA synthesis releases the replication blockade of replicative polymerases, stalled in presence of DNA lesions. Component of the shieldin complex, which plays an important role in repair of DNA double-stranded breaks (DSBs). During G1 and S phase of the cell cycle, the complex functions downstream of TP53BP1 to promote non-homologous end joining (NHEJ) and suppress DNA end resection. Mediates various NHEJ-dependent processes including immunoglobulin class-switch recombination, and fusion of unprotected telomeres. May also regulate another aspect of cellular response to DNA damage through regulation of the JNK-mediated phosphorylation and activation of the transcriptional activator ELK1. Inhibits the FZR1- and probably CDC20-mediated activation of the anaphase promoting complex APC thereby regulating progression through the cell cycle. Regulates TCF7L2-mediated gene transcription and may play a role in epithelial-mesenchymal transdifferentiation. This chain is Mitotic spindle assembly checkpoint protein MAD2B (MAD2L2), found in Homo sapiens (Human).